The primary structure comprises 857 residues: RNA-directed RNA polymerase 2a (857 aa).

One can recognise a RdRp catalytic domain in the interval 511-624; sequence KHCLEIDLSK…FSLLPPVGDP (114 aa). The segment covering 780–789 has biased composition (basic and acidic residues); it reads IERRCNDKRR. Residues 780–829 are disordered; that stretch reads IERRCNDKRRTPTGSYGGGEEAETKVSQTESTGTRSQKSQRESAFKSQTV. A compositionally biased stretch (polar residues) spans 804 to 816; sequence KVSQTESTGTRSQ.

Belongs to the ssRNA positive-strand viruses RNA-directed RNA polymerase family. Interacts with replication protein 1a.

It catalyses the reaction RNA(n) + a ribonucleoside 5'-triphosphate = RNA(n+1) + diphosphate. Functionally, RNA-dependent RNA polymerase which replicates the viral genome composed of 3 RNA segments, RNA1, RNA2 and RNA3. The chain is RNA-directed RNA polymerase 2a from Cucumis sativus (Cucumber).